Reading from the N-terminus, the 63-residue chain is 2-hydroxymuconate tautomerase (63 aa).

Proline 2 serves as the catalytic Proton acceptor; via imino nitrogen.

It belongs to the 4-oxalocrotonate tautomerase family. Homohexamer.

It carries out the reaction (2Z,4E)-2-hydroxyhexa-2,4-dienedioate = (3E)-2-oxohex-3-enedioate. It participates in aromatic compound metabolism; salicylate degradation. Catalyzes the ketonization of 2-hydroxymuconate stereoselectively to yield 2-oxo-3-hexenedioate. The polypeptide is 2-hydroxymuconate tautomerase (aphI) (Comamonas testosteroni (Pseudomonas testosteroni)).